The following is a 525-amino-acid chain: Glutamate--cysteine ligase (525 aa).

It belongs to the glutamate--cysteine ligase type 1 family. Type 1 subfamily.

It carries out the reaction L-cysteine + L-glutamate + ATP = gamma-L-glutamyl-L-cysteine + ADP + phosphate + H(+). Its pathway is sulfur metabolism; glutathione biosynthesis; glutathione from L-cysteine and L-glutamate: step 1/2. This chain is Glutamate--cysteine ligase, found in Vibrio vulnificus (strain CMCP6).